The following is a 682-amino-acid chain: Zinc finger protein 16 (682 aa).

The segment covering 1–10 (MPSLRTRREE) has biased composition (basic and acidic residues). Residues 1 to 38 (MPSLRTRREEAEMELSAPGPSPWTPAAQARVSDAPAVT) are disordered. The segment at 62–210 (YQQPDCDTRT…GVPTAESPLI (149 aa)) is necessary for transcription activation. The C2H2-type 1; degenerate zinc-finger motif lies at 209-231 (LICNECGKTFRGNPDLIQRQIVH). A C2H2-type 2; degenerate zinc finger spans residues 237 to 259 (FMCDDCGKTFSQNSVLKNRHRSH). Lys253 is covalently cross-linked (Glycyl lysine isopeptide (Lys-Gly) (interchain with G-Cter in SUMO2)). C2H2-type zinc fingers lie at residues 265-287 (YQCSECGKAFRGHSDFSRHQSHH), 293-315 (YTCTECGKAFSQNSSLKKHQKSH), 321-343 (YECNECGKAFRRSSNLIQHQRIH), 349-371 (YVCSECGKAFRRSSNLIKHHRTH), 377-399 (FECGECGKAFSQSAHLRKHQRVH), 405-427 (YECNDCGKPFSRVSNLIKHHRVH), 433-455 (YKCSDCGKXFSQSSSLIQHRRIH), and 461-483 (HVCNVCGKAFSYSSVLRKHQIIH). 2 required for nuclear localization regions span residues 268-393 (SECG…AHLR) and 341-373 (RIHSGEKPYVCSECGKAFRRSSNLIKHHRTHTG). Residues 473–503 (SSVLRKHQIIHTGEKPYRCSVCGKAFSHSSA) are required for nuclear localization. Lys487 carries the N6-acetyllysine modification. 7 consecutive C2H2-type zinc fingers follow at residues 489–511 (YRCSVCGKAFSHSSALIQHQGVH), 517–539 (YACHECGKTFGRSSNLILHQRVH), 545–567 (YECTECGKTFSQSSTLIQHQRIH), 573–595 (HECNQCGKAFNRSSNLIHHQKVH), 601–623 (YTCVECGKGFSQSSHLIQHQIIH), 629–651 (YKCSECGKAFSQRSVLIQHQRIH), and 657–679 (YDCAACGKAFSQRSKLIKHQLIH).

It belongs to the krueppel C2H2-type zinc-finger protein family. As to quaternary structure, interacts with INCA1; the interaction inhibits INCA1 activity and induces the cell cycle process.

The protein resides in the nucleus. Acts as a transcriptional activator. Promotes cell proliferation by facilitating the cell cycle phase transition from the S to G2/M phase. Involved in both the hemin- and phorbol myristate acetate (PMA)-induced erythroid and megakaryocytic differentiation, respectively. Also plays a role as an inhibitor of cell apoptosis. This chain is Zinc finger protein 16 (ZNF16), found in Pan troglodytes (Chimpanzee).